We begin with the raw amino-acid sequence, 260 residues long: Carbonic anhydrase 2 (260 aa).

Residues 3 to 259 enclose the Alpha-carbonic anhydrase domain; that stretch reads HGWGYADHNG…LKDRKVCASF (257 aa). His64 functions as the Proton donor/acceptor in the catalytic mechanism. Residues His94, His96, and His119 each coordinate Zn(2+). Residue 198–199 coordinates substrate; that stretch reads TT.

This sequence belongs to the alpha-carbonic anhydrase family. Zn(2+) is required as a cofactor.

The protein localises to the cytoplasm. It carries out the reaction hydrogencarbonate + H(+) = CO2 + H2O. Functionally, catalyzes the reversible hydration of carbon dioxide. The protein is Carbonic anhydrase 2 (ca2) of Pseudaspius hakonensis (Big-scaled redfin).